A 156-amino-acid polypeptide reads, in one-letter code: Endogenous retrovirus group K member 9 Pro protein (156 aa).

Positions 21 to 96 constitute a Peptidase A2 domain; that stretch reads FEGLVDTGAD…IPLNLWGRDL (76 aa). Residue D26 is part of the active site. In terms of domain architecture, G-patch spans 111–156; sequence YSPTSQKIMTKRGYIPGKGLGKNEDGIKIPFEAKINQKREGIGYPF.

Belongs to the peptidase A2 family. HERV class-II K(HML-2) subfamily. Active as a homodimer. Autoproteolytically processed at the N-terminus. Expected C-terminal autoprocessing not detected. The sequence shown is that of the processed Pro protein.

The catalysed reaction is Processing at the authentic HIV-1 PR recognition site and release of the mature p17 matrix and the p24 capsid protein, as a result of the cleavage of the -SQNY-|-PIVQ- cleavage site.. Functionally, retroviral proteases have roles in the processing of the primary translation products and the maturation of the viral particle. Endogenous Pro proteins may have kept, lost or modified their original function during evolution. The polypeptide is Endogenous retrovirus group K member 9 Pro protein (ERVK-9) (Homo sapiens (Human)).